A 208-amino-acid chain; its full sequence is MLNIDKLIIGFDSALRTLLAPANTLRPVPGKDLPENELSEIEKRESAALMRINHVGEVCAQALYQGQALTARNDRVRQALDQAAREETEHLAWTERRIAELGGRKSFLNPLWYGGSFTLGLVAGVLGDKWNLGFLAETERQVEAHLADHLQRLPHQDVRSRAIVTQMKVDEACHATMAVSHGGGQLPAPVKVAMKFSSRIMTRTAYWV.

Fe cation-binding residues include glutamate 57, glutamate 87, histidine 90, glutamate 139, glutamate 171, and histidine 174.

This sequence belongs to the COQ7 family. Fe cation is required as a cofactor.

It is found in the cell membrane. The catalysed reaction is a 5-methoxy-2-methyl-3-(all-trans-polyprenyl)benzene-1,4-diol + AH2 + O2 = a 3-demethylubiquinol + A + H2O. Its pathway is cofactor biosynthesis; ubiquinone biosynthesis. In terms of biological role, catalyzes the hydroxylation of 2-nonaprenyl-3-methyl-6-methoxy-1,4-benzoquinol during ubiquinone biosynthesis. This Nitrosomonas europaea (strain ATCC 19718 / CIP 103999 / KCTC 2705 / NBRC 14298) protein is 3-demethoxyubiquinol 3-hydroxylase.